The following is a 527-amino-acid chain: SusD-like protein P25 (527 aa).

The signal sequence occupies residues 1 to 15; that stretch reads MKIQNIIVYVFLIFS. Cys-16 carries N-palmitoyl cysteine lipidation. The S-diacylglycerol cysteine moiety is linked to residue Cys-16.

It belongs to the SusD family.

Its subcellular location is the cell outer membrane. In terms of biological role, polysaccharide-binding protein probably involved in ulvan degradation. Ulvan is the main polysaccharide component of the Ulvales (green seaweed) cell wall. It is composed of disaccharide building blocks comprising 3-sulfated rhamnose (Rha3S) linked to D-glucuronic acid (GlcA), L-iduronic acid (IduA), or D-xylose (Xyl). The SusD-like protein may mediate ulvan oligomer-binding before transport in the periplasm for further degradation. This Formosa agariphila (strain DSM 15362 / KCTC 12365 / LMG 23005 / KMM 3901 / M-2Alg 35-1) protein is SusD-like protein P25.